The chain runs to 317 residues: Acetyl-coenzyme A carboxylase carboxyl transferase subunit alpha (317 aa).

One can recognise a CoA carboxyltransferase C-terminal domain in the interval 43-293; that stretch reads RVRESMADIY…GDVISNALGE (251 aa).

This sequence belongs to the AccA family. As to quaternary structure, acetyl-CoA carboxylase is a heterohexamer composed of biotin carboxyl carrier protein (AccB), biotin carboxylase (AccC) and two subunits each of ACCase subunit alpha (AccA) and ACCase subunit beta (AccD).

It localises to the cytoplasm. It carries out the reaction N(6)-carboxybiotinyl-L-lysyl-[protein] + acetyl-CoA = N(6)-biotinyl-L-lysyl-[protein] + malonyl-CoA. Its pathway is lipid metabolism; malonyl-CoA biosynthesis; malonyl-CoA from acetyl-CoA: step 1/1. In terms of biological role, component of the acetyl coenzyme A carboxylase (ACC) complex. First, biotin carboxylase catalyzes the carboxylation of biotin on its carrier protein (BCCP) and then the CO(2) group is transferred by the carboxyltransferase to acetyl-CoA to form malonyl-CoA. This Rhizobium rhizogenes (strain K84 / ATCC BAA-868) (Agrobacterium radiobacter) protein is Acetyl-coenzyme A carboxylase carboxyl transferase subunit alpha.